We begin with the raw amino-acid sequence, 249 residues long: Ribosomal RNA small subunit methyltransferase G (249 aa).

Residues Gly86, Phe91, and Arg178 each coordinate S-adenosyl-L-methionine.

The protein belongs to the methyltransferase superfamily. RNA methyltransferase RsmG family.

The protein localises to the cytoplasm. In terms of biological role, specifically methylates the N7 position of a guanine in 16S rRNA. The chain is Ribosomal RNA small subunit methyltransferase G from Bifidobacterium adolescentis (strain ATCC 15703 / DSM 20083 / NCTC 11814 / E194a).